We begin with the raw amino-acid sequence, 482 residues long: tRNA sulfurtransferase (482 aa).

One can recognise a THUMP domain in the interval 61–165 (LAIRDALTRI…DDRLLLIKGR (105 aa)). Residues 183 to 184 (LI), Lys-265, Gly-287, and Gln-296 contribute to the ATP site. Cys-344 and Cys-456 are disulfide-bonded. The Rhodanese domain occupies 404–482 (FGPNDVILDI…GFNNVKVYRL (79 aa)). Residue Cys-456 is the Cysteine persulfide intermediate of the active site.

The protein belongs to the ThiI family.

The protein resides in the cytoplasm. It carries out the reaction [ThiI sulfur-carrier protein]-S-sulfanyl-L-cysteine + a uridine in tRNA + 2 reduced [2Fe-2S]-[ferredoxin] + ATP + H(+) = [ThiI sulfur-carrier protein]-L-cysteine + a 4-thiouridine in tRNA + 2 oxidized [2Fe-2S]-[ferredoxin] + AMP + diphosphate. The enzyme catalyses [ThiS sulfur-carrier protein]-C-terminal Gly-Gly-AMP + S-sulfanyl-L-cysteinyl-[cysteine desulfurase] + AH2 = [ThiS sulfur-carrier protein]-C-terminal-Gly-aminoethanethioate + L-cysteinyl-[cysteine desulfurase] + A + AMP + 2 H(+). It functions in the pathway cofactor biosynthesis; thiamine diphosphate biosynthesis. In terms of biological role, catalyzes the ATP-dependent transfer of a sulfur to tRNA to produce 4-thiouridine in position 8 of tRNAs, which functions as a near-UV photosensor. Also catalyzes the transfer of sulfur to the sulfur carrier protein ThiS, forming ThiS-thiocarboxylate. This is a step in the synthesis of thiazole, in the thiamine biosynthesis pathway. The sulfur is donated as persulfide by IscS. In Shigella boydii serotype 18 (strain CDC 3083-94 / BS512), this protein is tRNA sulfurtransferase.